The following is a 393-amino-acid chain: Methyltransferase-like protein 22 (393 aa).

Residues 54–87 form a disordered region; sequence WTDSGAEDSGPTDVSTEEMPPAGSGSGHSHEDLS. Serine 120 bears the Phosphoserine mark.

Belongs to the methyltransferase superfamily. METTL22 family. In terms of assembly, interacts with members of the heat shock protein 90 and 70 families; these proteins probably are methylation substrates.

It localises to the nucleus. It carries out the reaction L-lysyl-[protein] + 3 S-adenosyl-L-methionine = N(6),N(6),N(6)-trimethyl-L-lysyl-[protein] + 3 S-adenosyl-L-homocysteine + 3 H(+). Functionally, protein N-lysine methyltransferase. Trimethylates KIN at Lys-135 (in vitro). The polypeptide is Methyltransferase-like protein 22 (Mettl22) (Mus musculus (Mouse)).